Here is a 102-residue protein sequence, read N- to C-terminus: Small ribosomal subunit protein uS10 (102 aa).

This sequence belongs to the universal ribosomal protein uS10 family. In terms of assembly, part of the 30S ribosomal subunit.

Involved in the binding of tRNA to the ribosomes. This is Small ribosomal subunit protein uS10 from Methanococcus maripaludis (strain C5 / ATCC BAA-1333).